Consider the following 77-residue polypeptide: DNA-directed RNA polymerase subunit epsilon (77 aa).

Belongs to the RNA polymerase subunit epsilon family. In terms of assembly, RNAP is composed of a core of 2 alpha, a beta and a beta' subunit. The core is associated with a delta subunit, and at least one of epsilon or omega. When a sigma factor is associated with the core the holoenzyme is formed, which can initiate transcription.

The catalysed reaction is RNA(n) + a ribonucleoside 5'-triphosphate = RNA(n+1) + diphosphate. Functionally, a non-essential component of RNA polymerase (RNAP). The sequence is that of DNA-directed RNA polymerase subunit epsilon from Streptococcus pneumoniae serotype 2 (strain D39 / NCTC 7466).